Reading from the N-terminus, the 581-residue chain is Interleukin-22 receptor subunit alpha-1 (581 aa).

The signal sequence occupies residues 1–15 (MRTLLTILAAGSLLA). Residues 16–228 (HITEDTSDLL…VKTLPDRTWT (213 aa)) are Extracellular-facing. Fibronectin type-III domains follow at residues 18-115 (TEDT…RFSS) and 141-221 (PTYT…RVKT). Cysteine 71 and cysteine 79 are disulfide-bonded. Asparagine 80 is a glycosylation site (N-linked (GlcNAc...) asparagine). Cysteine 128 and cysteine 217 are joined by a disulfide. The chain crosses the membrane as a helical span at residues 229–249 (YSFSGAFLFSLGFLVAGLCYL). Over 250–581 (SYRYITKPPP…GLALTVQWES (332 aa)) the chain is Cytoplasmic. Disordered regions lie at residues 354-493 (QAAP…SSLK) and 539-563 (PSDEDPVSKTEAESPGLQAPDLESP). Polar residues predominate over residues 378–389 (TPQAVSETQLPS). Serine 410 and serine 414 each carry phosphoserine. Over residues 440-449 (CSPTGLSLQE) the composition is skewed to polar residues.

It belongs to the type II cytokine receptor family. In terms of assembly, heterodimer with IL10RB and with IL20RB. Interacts with FBXW12; the interaction promotes ubiquitination of IL22RA1. Ubiquitinated.

It localises to the cell membrane. Functionally, component of the receptor for IL20, IL22 and IL24. Component of IL22 receptor formed by IL22RA1 and IL10RB enabling IL22 signaling via JAK/STAT pathways. IL22 also induces activation of MAPK1/MAPK3 and Akt kinases pathways. Component of one of the receptor for IL20 and IL24 formed by IL22RA1 and IL20RB also signaling through STATs activation. Mediates IL24 antiangiogenic activity as well as IL24 inhibitory effect on endothelial cell tube formation and differentiation. In Bos taurus (Bovine), this protein is Interleukin-22 receptor subunit alpha-1 (IL22RA1).